Reading from the N-terminus, the 591-residue chain is Aspartate--tRNA(Asp/Asn) ligase (591 aa).

E174 is a binding site for L-aspartate. Positions 198-201 (QLFK) are aspartate. R220 serves as a coordination point for L-aspartate. Residues 220–222 (RDE) and Q229 each bind ATP. H450 lines the L-aspartate pocket. Residue E483 coordinates ATP. Residue R490 coordinates L-aspartate. An ATP-binding site is contributed by 535–538 (GLDR).

The protein belongs to the class-II aminoacyl-tRNA synthetase family. Type 1 subfamily. Homodimer.

It localises to the cytoplasm. It catalyses the reaction tRNA(Asx) + L-aspartate + ATP = L-aspartyl-tRNA(Asx) + AMP + diphosphate. Aspartyl-tRNA synthetase with relaxed tRNA specificity since it is able to aspartylate not only its cognate tRNA(Asp) but also tRNA(Asn). Reaction proceeds in two steps: L-aspartate is first activated by ATP to form Asp-AMP and then transferred to the acceptor end of tRNA(Asp/Asn). In Pseudomonas savastanoi pv. phaseolicola (strain 1448A / Race 6) (Pseudomonas syringae pv. phaseolicola (strain 1448A / Race 6)), this protein is Aspartate--tRNA(Asp/Asn) ligase.